A 127-amino-acid polypeptide reads, in one-letter code: 13 kDa ribonucleoprotein-associated protein (127 aa).

It belongs to the eukaryotic ribosomal protein eL8 family. In terms of assembly, component of the U3 snoRNP particle. Binds to the C'/D and B/C motifs in U3 snoRNA. Component of the 25S U4/U6.U5 tri-snRNP particle, a subcomplex of the spliceosome. Binds to the 5' stem-loop of U4 snRNA.

Its subcellular location is the nucleus. It localises to the nucleolus. Functionally, common component of the spliceosome and rRNA processing machinery. In association with the spliceosomal U4/U6.U5 tri-snRNP particle, required for splicing of pre-mRNA. In association with box C/D snoRNPs, required for processing of pre-ribosomal RNA (rRNA) and site-specific 2'-O-methylation of substrate RNAs. Essential for the accumulation and stability of U4 snRNA, U6 snRNA, and box C/D snoRNAs. The protein is 13 kDa ribonucleoprotein-associated protein (SNU13) of Eremothecium gossypii (strain ATCC 10895 / CBS 109.51 / FGSC 9923 / NRRL Y-1056) (Yeast).